A 234-amino-acid chain; its full sequence is N-(5'-phosphoribosyl)anthranilate isomerase (234 aa).

Residues 211–234 (RAASSSPRPVDGESPAFQRSEKAG) form a disordered region.

It belongs to the TrpF family.

It catalyses the reaction N-(5-phospho-beta-D-ribosyl)anthranilate = 1-(2-carboxyphenylamino)-1-deoxy-D-ribulose 5-phosphate. The protein operates within amino-acid biosynthesis; L-tryptophan biosynthesis; L-tryptophan from chorismate: step 3/5. This chain is N-(5'-phosphoribosyl)anthranilate isomerase, found in Afipia carboxidovorans (strain ATCC 49405 / DSM 1227 / KCTC 32145 / OM5) (Oligotropha carboxidovorans).